Here is a 149-residue protein sequence, read N- to C-terminus: UPF0310 protein SSO2595 (149 aa).

It belongs to the UPF0310 family.

The protein is UPF0310 protein SSO2595 of Saccharolobus solfataricus (strain ATCC 35092 / DSM 1617 / JCM 11322 / P2) (Sulfolobus solfataricus).